A 211-amino-acid chain; its full sequence is Regulator of G-protein signaling 2 (211 aa).

Disordered regions lie at residues 14–33 (RPMD…REKM) and 49–68 (LQNS…KQQA). The interval 32 to 66 (KMKRTLLKDWKTRLSYFLQNSSTPGKPKTGKKSKQ) is necessary for membrane association. Residues 79 to 116 (LWSEAFDELLASKYGLAAFRAFLKSEFCEENIEFWLAC) are necessary to inhibit protein synthesis. The RGS domain occupies 83-199 (AFDELLASKY…LESEFYQDLC (117 aa)).

Interacts with GNAQ. Does not interact with GNAI1 and GNAI3. Interacts with EIF2B5. Interacts with PRKG1 (isoform alpha). In terms of processing, phosphorylated by protein kinase C. Phosphorylation by PRKG1 leads to activation of RGS2 activity. Expressed in acute myelogenous leukemia (AML) and in acute lymphoblastic leukemia (ALL).

The protein localises to the cell membrane. Its subcellular location is the cytoplasm. The protein resides in the nucleus. It localises to the nucleolus. It is found in the mitochondrion. Regulates G protein-coupled receptor signaling cascades. Inhibits signal transduction by increasing the GTPase activity of G protein alpha subunits, thereby driving them into their inactive GDP-bound form. It is involved in the negative regulation of the angiotensin-activated signaling pathway. Plays a role in the regulation of blood pressure in response to signaling via G protein-coupled receptors and GNAQ. Plays a role in regulating the constriction and relaxation of vascular smooth muscle. Binds EIF2B5 and blocks its activity, thereby inhibiting the translation of mRNA into protein. In Homo sapiens (Human), this protein is Regulator of G-protein signaling 2 (RGS2).